The chain runs to 119 residues: Small ribosomal subunit protein uS13m (119 aa).

This sequence belongs to the universal ribosomal protein uS13 family. As to quaternary structure, part of the small ribosomal subunit.

It localises to the mitochondrion. Functionally, located at the top of the head of the small subunit, it contacts several helices of the small subunit rRNA. The polypeptide is Small ribosomal subunit protein uS13m (RPS13) (Prototheca wickerhamii).